A 105-amino-acid chain; its full sequence is Insulin (105 aa).

The N-terminal stretch at 1-22 (MAFWLQAASLLVLLALSPGVDA) is a signal peptide. Cystine bridges form between cysteine 29/cysteine 91, cysteine 41/cysteine 104, and cysteine 90/cysteine 95. Residues 53–82 (DVDPLIGFLSPKSAKENEEYPFKDQTEMMV) constitute a propeptide, c peptide.

This sequence belongs to the insulin family. Heterodimer of a B chain and an A chain linked by two disulfide bonds.

Its subcellular location is the secreted. Its function is as follows. Insulin decreases blood glucose concentration. It increases cell permeability to monosaccharides, amino acids and fatty acids. It accelerates glycolysis, the pentose phosphate cycle, and glycogen synthesis in liver. This is Insulin (ins) from Oncorhynchus keta (Chum salmon).